A 286-amino-acid polypeptide reads, in one-letter code: Bifunctional protein FolD (286 aa).

Residues 165–167 (GRS) and Ser-190 each bind NADP(+).

This sequence belongs to the tetrahydrofolate dehydrogenase/cyclohydrolase family. In terms of assembly, homodimer.

The catalysed reaction is (6R)-5,10-methylene-5,6,7,8-tetrahydrofolate + NADP(+) = (6R)-5,10-methenyltetrahydrofolate + NADPH. It carries out the reaction (6R)-5,10-methenyltetrahydrofolate + H2O = (6R)-10-formyltetrahydrofolate + H(+). Its pathway is one-carbon metabolism; tetrahydrofolate interconversion. In terms of biological role, catalyzes the oxidation of 5,10-methylenetetrahydrofolate to 5,10-methenyltetrahydrofolate and then the hydrolysis of 5,10-methenyltetrahydrofolate to 10-formyltetrahydrofolate. The polypeptide is Bifunctional protein FolD (Staphylococcus aureus (strain MRSA252)).